The primary structure comprises 84 residues: U8-theraphotoxin-Hhn1a (84 aa).

The first 21 residues, 1–21, serve as a signal peptide directing secretion; it reads MKVVLLECLVWMMAMMELVSC. Intrachain disulfides connect Cys-23-Cys-35, Cys-29-Cys-44, Cys-34-Cys-67, Cys-54-Cys-75, and Cys-69-Cys-81.

It belongs to the AVIT (prokineticin) family. As to expression, expressed by the venom gland.

Its subcellular location is the secreted. In Cyriopagopus hainanus (Chinese bird spider), this protein is U8-theraphotoxin-Hhn1a.